The chain runs to 492 residues: MWRGLSALVTQAAWAPLRLCARCSTSAESLVPSSTIFALSSGQGRCAIAVIRTSGPASGLALRSLTALQEPPPARRACLRLLRHPCSGEPLDRSLVLWFPGPQSFTGEDCVEFHVHGGPAVVSGVLQALGSVPGLRPAEAGEFTRRAFAHGKLSLTEVEGLADLIRAETEAQRRQALRQLDGELSQLCQGWAKTLTKALAYVEAYIDFGEDDNLEEGVLEQADREVRALEVALGSHLRDARRGQRLLSGANVVVTGPPNAGKSSLVNLLSQKPVSIVSPEPGTTRDVLETPVDLAGFPVLLSDTAGLREGVGAVEQEGVRRARHRLEQADIILGVLDASDLASSSSCSFLDTVVTPLLAQSQDSGGQRLLLLLNKSDLLSANAPACDIALPPHLLLSCHTGAGMDSLLQALKTELAAVCGDPSTGPPLLTRVRHQYHLQGCLDALGHYQLATDLALAAEALRQARRQLNHLTGGGGTEEILDLIFQDFCVGK.

Residues 1-20 (MWRGLSALVTQAAWAPLRLC) constitute a mitochondrion transit peptide. Residues arginine 52, glutamate 112, and lysine 152 each coordinate 5,10-methylenetetrahydrofolate. The TrmE-type G domain maps to 249–416 (GANVVVTGPP…LLQALKTELA (168 aa)). GTP is bound by residues 256-263 (GPPNAGKS), 282-286 (GTTRD), 303-306 (DTAG), and 374-377 (NKSD). K(+) is bound at residue asparagine 259. The Mg(2+) site is built by serine 263 and threonine 284. Residue lysine 492 coordinates 5,10-methylenetetrahydrofolate.

This sequence belongs to the TRAFAC class TrmE-Era-EngA-EngB-Septin-like GTPase superfamily. TrmE GTPase family. Homodimer; forms a dimer in the presence of potassium. Interacts with MTO1; forms the GTPBP3-MTO1 complex composed of homodimers of GTPBP3 and MTO1. It depends on K(+) as a cofactor. As to expression, ubiquitously expressed. Highly expressed in tissues with high metabolic rates including heart, liver and brain. Weakly expressed in skeletal muscle.

It is found in the mitochondrion. It catalyses the reaction GTP + H2O = GDP + phosphate + H(+). Its function is as follows. GTPase component of the GTPBP3-MTO1 complex that catalyzes the 5-taurinomethyluridine (taum(5)U) modification at the 34th wobble position (U34) of mitochondrial tRNAs (mt-tRNAs), which plays a role in mt-tRNA decoding and mitochondrial translation. Taum(5)U formation on mammalian mt-tRNA requires the presence of both GTPBP3-mediated GTPase activity and MTO1 catalytic activity. The protein is 5-taurinomethyluridine-[tRNA] synthase subunit GTPB3, mitochondrial of Mus musculus (Mouse).